Reading from the N-terminus, the 227-residue chain is Probable cytokinin riboside 5'-monophosphate phosphoribohydrolase LOGL9 (227 aa).

Residues 1–15 are compositionally biased toward polar residues; that stretch reads MYISSPHTSHFTSID. Residues 1 to 26 are disordered; the sequence is MYISSPHTSHFTSIDRSPAVVSESDR. Residues Glu-117, 135 to 136, and 152 to 158 contribute to the substrate site; these read RK and GYGTLEE.

This sequence belongs to the LOG family. Expressed in roots, leaves and stems.

The catalysed reaction is N(6)-(dimethylallyl)adenosine 5'-phosphate + H2O = N(6)-dimethylallyladenine + D-ribose 5-phosphate. It catalyses the reaction 9-ribosyl-trans-zeatin 5'-phosphate + H2O = trans-zeatin + D-ribose 5-phosphate. Cytokinin-activating enzyme working in the direct activation pathway. Phosphoribohydrolase that converts inactive cytokinin nucleotides to the biologically active free-base forms. The chain is Probable cytokinin riboside 5'-monophosphate phosphoribohydrolase LOGL9 (LOGL9) from Oryza sativa subsp. japonica (Rice).